Here is a 448-residue protein sequence, read N- to C-terminus: Glutamyl-tRNA reductase (448 aa).

Substrate-binding positions include 49–52, Ser109, 114–116, and Gln120; these read TCNR and ETQ. Cys50 (nucleophile) is an active-site residue. 189–194 provides a ligand contact to NADP(+); that stretch reads GAGETG. Residues 427–448 form a disordered region; it reads PVDEVEETDATSAKAPLRALMR.

Belongs to the glutamyl-tRNA reductase family. As to quaternary structure, homodimer.

It carries out the reaction (S)-4-amino-5-oxopentanoate + tRNA(Glu) + NADP(+) = L-glutamyl-tRNA(Glu) + NADPH + H(+). The protein operates within porphyrin-containing compound metabolism; protoporphyrin-IX biosynthesis; 5-aminolevulinate from L-glutamyl-tRNA(Glu): step 1/2. In terms of biological role, catalyzes the NADPH-dependent reduction of glutamyl-tRNA(Glu) to glutamate 1-semialdehyde (GSA). This is Glutamyl-tRNA reductase from Exiguobacterium sp. (strain ATCC BAA-1283 / AT1b).